The primary structure comprises 236 residues: 2-C-methyl-D-erythritol 4-phosphate cytidylyltransferase (236 aa).

It belongs to the IspD/TarI cytidylyltransferase family. IspD subfamily. As to quaternary structure, homodimer.

The enzyme catalyses 2-C-methyl-D-erythritol 4-phosphate + CTP + H(+) = 4-CDP-2-C-methyl-D-erythritol + diphosphate. Its pathway is isoprenoid biosynthesis; isopentenyl diphosphate biosynthesis via DXP pathway; isopentenyl diphosphate from 1-deoxy-D-xylulose 5-phosphate: step 2/6. In terms of biological role, catalyzes the formation of 4-diphosphocytidyl-2-C-methyl-D-erythritol from CTP and 2-C-methyl-D-erythritol 4-phosphate (MEP). The polypeptide is 2-C-methyl-D-erythritol 4-phosphate cytidylyltransferase (Escherichia coli O45:K1 (strain S88 / ExPEC)).